The chain runs to 77 residues: NADH-ubiquinone oxidoreductase chain 4L (77 aa).

Transmembrane regions (helical) follow at residues L18–G38 and M44–V64.

It belongs to the complex I subunit 4L family.

It is found in the mitochondrion membrane. The catalysed reaction is a ubiquinone + NADH + 5 H(+)(in) = a ubiquinol + NAD(+) + 4 H(+)(out). Its function is as follows. Core subunit of the mitochondrial membrane respiratory chain NADH dehydrogenase (Complex I) that is believed to belong to the minimal assembly required for catalysis. Complex I functions in the transfer of electrons from NADH to the respiratory chain. The immediate electron acceptor for the enzyme is believed to be ubiquinone. The polypeptide is NADH-ubiquinone oxidoreductase chain 4L (ND4L) (Ascaris suum (Pig roundworm)).